The chain runs to 64 residues: MRLHHLLLTLLFLVLSAGSGFTQGISNPLSCRLNRGICVPIRCPGNLRQIGTCFTPSVKCCRWR.

A signal peptide spans 1–26; sequence MRLHHLLLTLLFLVLSAGSGFTQGIS. 3 cysteine pairs are disulfide-bonded: Cys-31-Cys-60, Cys-38-Cys-53, and Cys-43-Cys-61.

It belongs to the beta-defensin family. LAP/TAP subfamily. Inducibly expressed in enteric epithelial cells.

Its subcellular location is the secreted. Has antibacterial activity. This chain is Enteric beta-defensin (EBD), found in Bos taurus (Bovine).